Reading from the N-terminus, the 672-residue chain is Glycine--tRNA ligase beta subunit (672 aa).

The protein belongs to the class-II aminoacyl-tRNA synthetase family. Tetramer of two alpha and two beta subunits.

The protein localises to the cytoplasm. It carries out the reaction tRNA(Gly) + glycine + ATP = glycyl-tRNA(Gly) + AMP + diphosphate. The chain is Glycine--tRNA ligase beta subunit from Thermotoga sp. (strain RQ2).